The chain runs to 305 residues: Phosphoribosylaminoimidazole-succinocarboxamide synthase (305 aa).

This sequence belongs to the SAICAR synthetase family.

It catalyses the reaction 5-amino-1-(5-phospho-D-ribosyl)imidazole-4-carboxylate + L-aspartate + ATP = (2S)-2-[5-amino-1-(5-phospho-beta-D-ribosyl)imidazole-4-carboxamido]succinate + ADP + phosphate + 2 H(+). Its pathway is purine metabolism; IMP biosynthesis via de novo pathway; 5-amino-1-(5-phospho-D-ribosyl)imidazole-4-carboxamide from 5-amino-1-(5-phospho-D-ribosyl)imidazole-4-carboxylate: step 1/2. This chain is Phosphoribosylaminoimidazole-succinocarboxamide synthase, found in Tropheryma whipplei (strain TW08/27) (Whipple's bacillus).